The chain runs to 453 residues: Ribulose bisphosphate carboxylase large chain (453 aa).

Positions 1–2 (MS) are excised as a propeptide. N-acetylproline is present on P3. Residue K14 is modified to N6,N6,N6-trimethyllysine. Residues N123 and T173 each coordinate substrate. K175 functions as the Proton acceptor in the catalytic mechanism. K177 serves as a coordination point for substrate. K201, D203, and E204 together coordinate Mg(2+). K201 carries the N6-carboxylysine modification. The active-site Proton acceptor is the H294. R295, H327, and S379 together coordinate substrate.

It belongs to the RuBisCO large chain family. Type I subfamily. Heterohexadecamer of 8 large chains and 8 small chains; disulfide-linked. The disulfide link is formed within the large subunit homodimers. Mg(2+) is required as a cofactor. Post-translationally, the disulfide bond which can form in the large chain dimeric partners within the hexadecamer appears to be associated with oxidative stress and protein turnover.

Its subcellular location is the plastid. The protein localises to the chloroplast. It catalyses the reaction 2 (2R)-3-phosphoglycerate + 2 H(+) = D-ribulose 1,5-bisphosphate + CO2 + H2O. The catalysed reaction is D-ribulose 1,5-bisphosphate + O2 = 2-phosphoglycolate + (2R)-3-phosphoglycerate + 2 H(+). In terms of biological role, ruBisCO catalyzes two reactions: the carboxylation of D-ribulose 1,5-bisphosphate, the primary event in carbon dioxide fixation, as well as the oxidative fragmentation of the pentose substrate in the photorespiration process. Both reactions occur simultaneously and in competition at the same active site. The protein is Ribulose bisphosphate carboxylase large chain of Galium palustre (Common marsh bedstraw).